The primary structure comprises 73 residues: Protein F9 homolog (73 aa).

The Virion surface segment spans residues 1-34; that stretch reads GHAAANCALARVATALTRRVPASRHGLAEGGTPP. Residues 35–55 form a helical membrane-spanning segment; sequence WTLLLAVAAVTVLGVVAVSLL. The Intravirion segment spans residues 56–73; sequence RRALRVRYRFARPAALRA.

This sequence belongs to the chordopoxvirinae L1 protein family.

It localises to the virion membrane. This chain is Protein F9 homolog, found in Capra hircus (Goat).